The chain runs to 211 residues: Guanylate kinase (211 aa).

The region spanning G7 to M185 is the Guanylate kinase-like domain. G14–G21 serves as a coordination point for ATP.

It belongs to the guanylate kinase family.

The protein resides in the cytoplasm. The catalysed reaction is GMP + ATP = GDP + ADP. Essential for recycling GMP and indirectly, cGMP. This Symbiobacterium thermophilum (strain DSM 24528 / JCM 14929 / IAM 14863 / T) protein is Guanylate kinase.